Reading from the N-terminus, the 289-residue chain is DDRGK domain-containing protein 1 (289 aa).

Topologically, residues 1 to 2 (MD) are lumenal. A helical membrane pass occupies residues 3–23 (PFILAAIISGIVIIILSIAFL). Residues 24-289 (RVSQVKPQAA…LINLAPVTVP (266 aa)) lie on the Cytoplasmic side of the membrane. The segment at 65–168 (RHQAALEEEP…DERKKREQEE (104 aa)) is disordered. A compositionally biased stretch (acidic residues) spans 70-85 (LEEEPEIQEEADEGAP). A compositionally biased stretch (basic and acidic residues) spans 87 to 166 (IDQKIDFDDK…AEDERKKREQ (80 aa)).

It belongs to the DDRGK1 family. In terms of assembly, interacts with Atg9; the interaction is transient.

The protein localises to the endoplasmic reticulum membrane. Its function is as follows. Substrate adapter for ufmylation, the covalent attachment of the ubiquitin-like modifier UFM1 to substrate proteins. Required for ufmylation of Atg9; protects the nervous system during aging, possibly by stabilizing Atg9 and supporting its function. The protein is DDRGK domain-containing protein 1 of Bombyx mori (Silk moth).